A 212-amino-acid chain; its full sequence is Pyridoxine/pyridoxamine 5'-phosphate oxidase 1 (212 aa).

Substrate-binding positions include 8–11 and Lys-66; that span reads RTDY. Residues 61-66, 76-77, Lys-83, and Gln-105 each bind FMN; these read RIVLLK and FT. Substrate-binding residues include Tyr-123, Arg-127, and Ser-131. FMN contacts are provided by residues 140–141 and Trp-184; that span reads QS. Position 190–192 (190–192) interacts with substrate; that stretch reads RLH. An FMN-binding site is contributed by Arg-194.

Belongs to the pyridoxamine 5'-phosphate oxidase family. As to quaternary structure, homodimer. FMN serves as cofactor.

It catalyses the reaction pyridoxamine 5'-phosphate + O2 + H2O = pyridoxal 5'-phosphate + H2O2 + NH4(+). The catalysed reaction is pyridoxine 5'-phosphate + O2 = pyridoxal 5'-phosphate + H2O2. It participates in cofactor metabolism; pyridoxal 5'-phosphate salvage; pyridoxal 5'-phosphate from pyridoxamine 5'-phosphate: step 1/1. The protein operates within cofactor metabolism; pyridoxal 5'-phosphate salvage; pyridoxal 5'-phosphate from pyridoxine 5'-phosphate: step 1/1. In terms of biological role, catalyzes the oxidation of either pyridoxine 5'-phosphate (PNP) or pyridoxamine 5'-phosphate (PMP) into pyridoxal 5'-phosphate (PLP). This is Pyridoxine/pyridoxamine 5'-phosphate oxidase 1 from Ralstonia nicotianae (strain ATCC BAA-1114 / GMI1000) (Ralstonia solanacearum).